We begin with the raw amino-acid sequence, 80 residues long: Small ribosomal subunit protein uS17 (80 aa).

It belongs to the universal ribosomal protein uS17 family. In terms of assembly, part of the 30S ribosomal subunit.

One of the primary rRNA binding proteins, it binds specifically to the 5'-end of 16S ribosomal RNA. The sequence is that of Small ribosomal subunit protein uS17 from Brucella abortus (strain S19).